Here is a 167-residue protein sequence, read N- to C-terminus: Caffeine dehydrogenase subunit gamma (167 aa).

Residues 4 to 80 form the 2Fe-2S ferredoxin-type domain; that stretch reads HVISLTVNGQ…GHSIRTVEAL (77 aa). [2Fe-2S] cluster-binding residues include cysteine 42, cysteine 47, cysteine 50, and cysteine 62.

As to quaternary structure, heterotrimer composed of an alpha (CdhA), a beta (CdhB) and a gamma (CdhC) subunit.

The enzyme catalyses caffeine + a ubiquinone + H2O = 1,3,7-trimethylurate + a ubiquinol. It carries out the reaction ubiquinone-0 + caffeine + H2O = ubiquinol-0 + 1,3,7-trimethylurate. It catalyses the reaction theobromine + a ubiquinone + H2O = 3,7-dimethylurate + a ubiquinol. In terms of biological role, component of the caffeine dehydrogenase complex that catalyzes the hydrolytical oxidation of 1,3,7-trimethylxanthine (caffeine) by incorporation of an oxygen atom originating from a water molecule into position C-8 to produce 1,3,7-trimethyluric acid (TMU). Coenzyme Q0 (ubiquinone-0) is the preferred electron acceptor and, to a lesser extent, coenzyme Q2 (ubiquinone-2) can also be used, but oxygen and NAD(P)(+) cannot. Is involved in a caffeine degradation pathway that allows Pseudomonas sp. strain CBB1 to grow on caffeine as the sole carbon and nitrogen source. Is also active with theobromine as substrate, but shows a very poor activity with theophylline and is not active with xanthine, 3-methylxanthine, 7-methylxanthine, TMU, and 3,7-dimethylurate. This Pseudomonas sp. (strain CBB1) protein is Caffeine dehydrogenase subunit gamma.